We begin with the raw amino-acid sequence, 343 residues long: Glucokinase (343 aa).

21-26 (ADVGGT) serves as a coordination point for ATP.

The protein belongs to the bacterial glucokinase family.

Its subcellular location is the cytoplasm. It carries out the reaction D-glucose + ATP = D-glucose 6-phosphate + ADP + H(+). The sequence is that of Glucokinase from Cupriavidus pinatubonensis (strain JMP 134 / LMG 1197) (Cupriavidus necator (strain JMP 134)).